We begin with the raw amino-acid sequence, 200 residues long: Recombination protein RecR (200 aa).

The C4-type zinc finger occupies 59–74 (CEVCGNVCESSPCTIC). The Toprim domain maps to 82–177 (GTICVVEEPK…KVTRLASGLP (96 aa)).

This sequence belongs to the RecR family.

Functionally, may play a role in DNA repair. It seems to be involved in an RecBC-independent recombinational process of DNA repair. It may act with RecF and RecO. The chain is Recombination protein RecR from Bifidobacterium animalis subsp. lactis (strain AD011).